Here is a 155-residue protein sequence, read N- to C-terminus: Cyanate hydratase (155 aa).

Residues Arg101, Glu104, and Ser127 contribute to the active site.

It belongs to the cyanase family.

The catalysed reaction is cyanate + hydrogencarbonate + 3 H(+) = NH4(+) + 2 CO2. Functionally, catalyzes the reaction of cyanate with bicarbonate to produce ammonia and carbon dioxide. This Coccidioides posadasii (strain C735) (Valley fever fungus) protein is Cyanate hydratase.